The primary structure comprises 64 residues: Large ribosomal subunit protein bL35 (64 aa).

Belongs to the bacterial ribosomal protein bL35 family.

The sequence is that of Large ribosomal subunit protein bL35 from Shewanella sediminis (strain HAW-EB3).